Reading from the N-terminus, the 547-residue chain is Smu-2 suppressor of mec-8 and unc-52 protein (547 aa).

Disordered regions lie at residues 18–125 (TSAR…AQDQ), 164–202 (IDKS…AQEL), 288–459 (AEPK…AGPK), 496–515 (NGEG…AKRL), and 524–547 (KIMD…KPKY). Residues 34–44 (ADPKTGDDKPA) show a composition bias toward basic and acidic residues. Basic residues predominate over residues 45–58 (SFKHKHLKPAKFKK). Residues 66 to 94 (KAKKEKTEADEDEAALKNILKNYRDRAAE) are a coiled coil. A compositionally biased stretch (basic and acidic residues) spans 87 to 106 (NYRDRAAERRKQGDEKEDPS). Residues 163 to 223 (EIDKSDDDDD…SLHRVLFKNE (61 aa)) form a required and sufficient for interaction with smu-1 region. Over residues 166-178 (KSDDDDDDDIDTA) the composition is skewed to acidic residues. Low complexity-rich tracts occupy residues 185-196 (SSSSSSKPSEAS) and 307-317 (APGAAAAAPGA). Basic and acidic residues predominate over residues 330 to 423 (VPSRKSRDSR…EREKKRKELE (94 aa)). Repeat copies occupy residues 336 to 337 (RD), 339 to 340 (RD), 348 to 349 (RD), 350 to 351 (RS), 352 to 353 (RD), 354 to 355 (RS), 356 to 357 (RD), 358 to 359 (RD), 360 to 361 (RD), 362 to 363 (RD), 364 to 365 (RD), and 367 to 368 (RD). The segment at 336–368 (RDSRDAGRRGSRRDRSRDRSRDRDRDRDRDNRD) is 12 X 2 AA repeats of R-[DS]. Positions 371 to 427 (FEKSANSRREEEQNRREQQRERERAEQERRREREKEREQEKAKEREKKRKELEESSG) form a coiled coil.

It belongs to the RED family. In terms of assembly, probable component of the spliceosome. Heterotetramer with smu-1. The smu-1 homodimer interacts (via the N-terminal region including the LisH and CTLH domains) with smu-2, giving rise to a heterotetramer. In terms of tissue distribution, ubiquitous.

Its subcellular location is the nucleus. Its function is as follows. Auxiliary spliceosomal protein that regulates selection of alternative splice sites in a small set of target pre-mRNA species. Selectively regulates alternative splicing of unc-52 exon 17. Thus, smu-2 mutants selectively suppress the effects of unc-52 nonsense mutations in exon 17 by promoting the accumulation of unc-52 isoforms that lack exon 17. In contrast, smu-2 mutants do not suppress the effects of an unc-52 mutation that affects the 5' splice site of exon 16. Required for normal accumulation of smu-1. The polypeptide is Smu-2 suppressor of mec-8 and unc-52 protein (Caenorhabditis elegans).